We begin with the raw amino-acid sequence, 414 residues long: Enolase (414 aa).

Gln-156 contacts (2R)-2-phosphoglycerate. Catalysis depends on Glu-200, which acts as the Proton donor. Residues Asp-236, Glu-281, and Asp-308 each coordinate Mg(2+). (2R)-2-phosphoglycerate-binding residues include Lys-333, Arg-362, Ser-363, and Lys-384. Lys-333 acts as the Proton acceptor in catalysis.

Belongs to the enolase family. It depends on Mg(2+) as a cofactor.

The protein resides in the cytoplasm. The protein localises to the secreted. It is found in the cell surface. It carries out the reaction (2R)-2-phosphoglycerate = phosphoenolpyruvate + H2O. It participates in carbohydrate degradation; glycolysis; pyruvate from D-glyceraldehyde 3-phosphate: step 4/5. Functionally, catalyzes the reversible conversion of 2-phosphoglycerate (2-PG) into phosphoenolpyruvate (PEP). It is essential for the degradation of carbohydrates via glycolysis. This Methanosphaera stadtmanae (strain ATCC 43021 / DSM 3091 / JCM 11832 / MCB-3) protein is Enolase.